We begin with the raw amino-acid sequence, 562 residues long: Putative transport protein YPA_0617 (562 aa).

Helical transmembrane passes span 8 to 28 (LLNG…LCLG), 37 to 57 (LGNA…HFAI), 66 to 86 (FMLF…SIFF), 94 to 114 (MLAL…GKLF), 118 to 138 (IGLT…LVGA), and 158 to 178 (NLSL…ILGA). 2 RCK C-terminal domains span residues 202–288 (LDTD…SFRN) and 290–373 (KEVF…KIGF). 5 helical membrane passes run 383–403 (LLAF…TFQF), 406–426 (FSFG…LGFL), 447–467 (FGLM…INSS), 475–495 (MLIS…VFGA), and 541–561 (IANV…PGIL).

The protein belongs to the AAE transporter (TC 2.A.81) family. YbjL subfamily.

Its subcellular location is the cell membrane. The chain is Putative transport protein YPA_0617 from Yersinia pestis bv. Antiqua (strain Antiqua).